Here is an 88-residue protein sequence, read N- to C-terminus: Large ribosomal subunit protein bL27 (88 aa).

Positions 1-21 are disordered; sequence MAHKKGASSSRNGRDSAAQRL.

It belongs to the bacterial ribosomal protein bL27 family.

The chain is Large ribosomal subunit protein bL27 from Mycobacterium sp. (strain MCS).